The chain runs to 1147 residues: Sterol regulatory element-binding protein 1 (1147 aa).

Residues 1–60 form a transcriptional activation (acidic) region; the sequence is MDEPPFSEAALEQALGEPCDLDAALLTDIEDMLQLINNQDSDFPGLFDPPYAGSGAGGTD. At 1-487 the chain is on the cytoplasmic side; sequence MDEPPFSEAA…HSRGMLDRSR (487 aa). The short motif at 27–35 is the 9aaTAD element; it reads TDIEDMLQL. The tract at residues 39–193 is disordered; the sequence is QDSDFPGLFD…PLPGLPLASP (155 aa). Composition is skewed to low complexity over residues 62–71 and 78–95; these read ASPDTSSPGS and TLSS…AAPS. The segment covering 96–105 has biased composition (pro residues); the sequence is PLSPPQPAPT. S98 and S117 each carry phosphoserine. The segment covering 170 to 190 has biased composition (low complexity); the sequence is GGFSTGSPPGNTQQPLPGLPL. The interaction with LMNA stretch occupies residues 234 to 497; the sequence is QQVPVLLQPH…LALCTLVFLC (264 aa). The bHLH domain maps to 323–373; it reads EKRTAHNAIEKRYRSSINDKIIELKDLVVGTEAKLNKSAVLRKAIDYIRFL. Phosphoserine; by SIK1 is present on residues S337 and S338. The segment at 373–394 is leucine-zipper; that stretch reads LQHSNQKLKQENLSLRTAVHKS. Phosphoserine; by AMPK is present on S396. The residue at position 402 (S402) is a Phosphoserine; by SIK1. The tract at residues 421–479 is disordered; the sequence is VEDTLTPPPSDAGSPFQSSPLSLGSRGSGSGGSGSDSEPDSPVFEDSKAKPEQRPSLHS. The residue at position 457 (S457) is a Phosphoserine. Residues 465–479 show a composition bias toward basic and acidic residues; it reads EDSKAKPEQRPSLHS. Residues 488–508 form a helical membrane-spanning segment; sequence LALCTLVFLCLSCNPLASLLG. Topologically, residues 509–547 are lumenal; it reads ARGLPSPSDTTSVYHSPGRNVLGTESRDGPGWAQWLLPP. Residues 548–568 form a helical membrane-spanning segment; the sequence is VVWLLNGLLVLVSLVLLFVYG. Residues 569–1147 are Cytoplasmic-facing; that stretch reads EPVTRPHSGP…LGGGTTVTSS (579 aa). S1060 bears the Phosphoserine mark.

It belongs to the SREBP family. In terms of assembly, forms a tight complex with SCAP, the SCAP-SREBP complex, in the endoplasmic reticulum membrane and the Golgi apparatus. Interacts with PAQR3; the interaction anchors the SCAP-SREBP complex to the Golgi apparatus in low cholesterol conditions. Efficient DNA binding of the soluble transcription factor fragment requires dimerization with another bHLH protein. Interacts with CEBPA, the interaction produces a transcriptional synergy. Interacts with LMNA. Processed in the Golgi apparatus, releasing the protein from the membrane. At low cholesterol the SCAP-SREBP complex is recruited into COPII vesicles for export from the endoplasmic reticulum. In the Golgi, complex SREBPs are cleaved sequentially by site-1 (MBTPS1, S1P) and site-2 (MBTPS2, S2P) protease. The first cleavage by site-1 protease occurs within the luminal loop, the second cleavage by site-2 protease occurs within the first transmembrane domain, releasing the transcription factor from the Golgi membrane. In terms of processing, phosphorylated by AMPK, leading to suppress protein processing and nuclear translocation, and repress target gene expression. Phosphorylation at Ser-402 by SIK1 represses activity possibly by inhibiting DNA-binding. Post-translationally, SCAP-free SREBF1 is ubiquitinated by the BCR(ARMC5) complex, leading to its degradation. Ubiquitinated; the nuclear form has a rapid turnover and is rapidly ubiquitinated and degraded by the proteasome in the nucleus. As to expression, expressed in a wide variety of tissues, most abundant in liver and adrenal gland. In fetal tissues lung and liver shows highest expression. In terms of tissue distribution, predominates in hepatoma cell lines. Also expressed in kidney, brain, white fat, and muscle. Predominantly expressed in liver and adipose tissues. Also expressed in kidney, brain, white fat, and muscle.

Its subcellular location is the endoplasmic reticulum membrane. It is found in the golgi apparatus membrane. The protein resides in the cytoplasmic vesicle. It localises to the COPII-coated vesicle membrane. The protein localises to the nucleus. Activation by cleavage is down-regulated upon activation of SIRT3-dependent PRKAA1/AMPK-alpha signaling cascade which leads to inhibition of ATP-consuming lipogenesis to restore cellular energy balance. Its function is as follows. Precursor of the transcription factor form (Processed sterol regulatory element-binding protein 1), which is embedded in the endoplasmic reticulum membrane. Low sterol concentrations promote processing of this form, releasing the transcription factor form that translocates into the nucleus and activates transcription of genes involved in cholesterol biosynthesis and lipid homeostasis. Key transcription factor that regulates expression of genes involved in cholesterol biosynthesis and lipid homeostasis. Binds to the sterol regulatory element 1 (SRE-1) (5'-ATCACCCCAC-3'). Has dual sequence specificity binding to both an E-box motif (5'-ATCACGTGA-3') and to SRE-1 (5'-ATCACCCCAC-3'). Regulates the promoters of genes involved in cholesterol biosynthesis and the LDL receptor (LDLR) pathway of sterol regulation. In terms of biological role, isoform expressed only in select tissues, which has higher transcriptional activity compared to SREBP-1C. Able to stimulate both lipogenic and cholesterogenic gene expression. Has a role in the nutritional regulation of fatty acids and triglycerides in lipogenic organs such as the liver. Required for innate immune response in macrophages by regulating lipid metabolism. Functionally, predominant isoform expressed in most tissues, which has weaker transcriptional activity compared to isoform SREBP-1A. Primarily controls expression of lipogenic gene. Strongly activates global lipid synthesis in rapidly growing cells. Its function is as follows. The absence of Golgi proteolytic processing requirement makes this isoform constitutively active in transactivation of lipogenic gene promoters. The sequence is that of Sterol regulatory element-binding protein 1 from Homo sapiens (Human).